The sequence spans 161 residues: Allophycocyanin subunit alpha 1 (161 aa).

N71 carries the post-translational modification N4-methylasparagine. C81 contributes to the (2R,3E)-phycocyanobilin binding site.

Belongs to the phycobiliprotein family. In terms of assembly, heterohexamer of two alpha chains, one alpha-B chain and three beta chains. In terms of processing, contains one covalently linked phycocyanobilin chromophore. The chromophore is added by phycocyanobilin lyase CpcS 1.

Its subcellular location is the cellular thylakoid membrane. In terms of biological role, light-harvesting photosynthetic bile pigment-protein from the phycobiliprotein complex. Allophycocyanin has a maximum absorption at approximately 650 to 653 nanometers. The protein is Allophycocyanin subunit alpha 1 (apcA1) of Nostoc sp. (strain PCC 7120 / SAG 25.82 / UTEX 2576).